The following is a 37-amino-acid chain: Large ribosomal subunit protein bL36 (37 aa).

It belongs to the bacterial ribosomal protein bL36 family.

The polypeptide is Large ribosomal subunit protein bL36 (Helicobacter pylori (strain ATCC 700392 / 26695) (Campylobacter pylori)).